A 218-amino-acid polypeptide reads, in one-letter code: Adenylate kinase (218 aa).

An ATP-binding site is contributed by 10 to 15 (GAGKGT). The segment at 30 to 59 (STGDMLRAAVKAGTPLGQQAKAVMESGGLV) is NMP. Residues T31, R36, 57–59 (GLV), 85–88 (GFPR), and Q92 each bind AMP. The segment at 122-159 (GRRSHPASGRTYHVKFNPPKVEGKDDITGEDLIQRKDD) is LID. Residues R123 and 132–133 (TY) each bind ATP. AMP contacts are provided by R156 and R167. An ATP-binding site is contributed by G203.

It belongs to the adenylate kinase family. In terms of assembly, monomer.

It is found in the cytoplasm. The enzyme catalyses AMP + ATP = 2 ADP. Its pathway is purine metabolism; AMP biosynthesis via salvage pathway; AMP from ADP: step 1/1. Functionally, catalyzes the reversible transfer of the terminal phosphate group between ATP and AMP. Plays an important role in cellular energy homeostasis and in adenine nucleotide metabolism. The protein is Adenylate kinase of Variovorax paradoxus (strain S110).